Reading from the N-terminus, the 215-residue chain is Glutathione S-transferase-like protein (215 aa).

The GST N-terminal domain occupies 1 to 76 (MPNARILKIQ…YVAASGPAAP (76 aa)). The region spanning 82-215 (NVAEQAAVRQ…LVAVRKEASV (134 aa)) is the GST C-terminal domain.

This sequence belongs to the GST superfamily.

This Aspergillus aculeatus (strain ATCC 16872 / CBS 172.66 / WB 5094) protein is Glutathione S-transferase-like protein.